The primary structure comprises 433 residues: Mitochondrial inner membrane protein OXA1L (433 aa).

The Mitochondrial intermembrane portion of the chain corresponds to 1 to 108; that stretch reads MARNLVCGRW…QCATEPSFTE (108 aa). Residues 109-129 form a helical membrane-spanning segment; the sequence is LGLGSYTPVGLIQNLLEYIHV. At 130 to 134 the chain is on the mitochondrial matrix side; it reads DLGLP. The chain crosses the membrane as a helical span at residues 135 to 155; it reads WWGAIATCTVLARCLVFPLIV. Over 156–207 the chain is Mitochondrial intermembrane; it reads KGQREAAKIHNHMPEMQKFSARIREAKLAGDQAEFYKATIEMTRYQKKHDIK. Residues 208–228 traverse the membrane as a helical segment; it reads LLRPLILPLTQAPVFISFFIA. The Mitochondrial matrix segment spans residues 229–255; that stretch reads LREMANLPVPSLQTGGLWWFQDLTVSD. Residues 256–276 form a helical membrane-spanning segment; the sequence is PIYVLPLVVTATMWCVLELGA. The Mitochondrial intermembrane portion of the chain corresponds to 277-293; sequence ETGVQSNDLQFMRNIIR. Residues 294–314 form a helical membrane-spanning segment; that stretch reads VMPLVVLPVTIHFPSAVFMYW. The Mitochondrial matrix segment spans residues 315 to 433; that stretch reads LSSNVFSLCQ…AKKPWQDTLG (119 aa). A Phosphoserine modification is found at Ser359. Residues Thr395 and Thr397 each carry the phosphothreonine modification. Residues 397–433 are disordered; that stretch reads THNPLLQHDPSHPPKAPNSNNSSIKANAKKPWQDTLG. Low complexity predominate over residues 413-426; sequence PNSNNSSIKANAKK.

The protein belongs to the OXA1/ALB3/YidC family. Monomer; predominantly monomeric at low salt concentrations. Homooligomer; predominantly homooligomeric at high salt concentrations. Associates with the mitochondrial ribosome. Associates preferentially as a dimer with the large ribosomal subunit 39S of the mitochondrial ribosome. Interacts with OXA1L; promoting cotranslational quality control in mitochondria.

It localises to the mitochondrion inner membrane. Functionally, mitochondrial membrane insertase that mediates the cotranslational insertion of integral membrane proteins into the mitochondrial inner membrane. Essential for the activity and assembly of cytochrome oxidase. Required for the correct biogenesis of ATP synthase and complex I in mitochondria. The protein is Mitochondrial inner membrane protein OXA1L (Oxa1l) of Mus musculus (Mouse).